The primary structure comprises 1460 residues: Probable outer membrane protein PmpC (1460 aa).

The first 20 residues, 1-20, serve as a signal peptide directing secretion; the sequence is MKFLSATAVFAAALPSITSA. 5 disordered regions span residues 21-48, 92-212, 279-372, 455-549, and 993-1021; these read SSVE…FTEI, SEEN…PDKD, TPPA…ESGS, TPEE…DSSI, and VDTS…TAQA. The span at 34–44 shows a compositional bias: low complexity; that stretch reads SSRTGSSSSQS. Over residues 97-114 the composition is skewed to polar residues; sequence QASFQDSAQNQTENASEG. Residues 115-137 show a composition bias toward low complexity; that stretch reads NSPNSENTNQSSTTETESITTDE. Residues 138-155 are compositionally biased toward polar residues; that stretch reads QVQNDNESAASVPTTVET. A compositionally biased stretch (low complexity) spans 290–327; the sequence is NDPSGSNGNDGSDDSNSSGNTDSNESNPNNSASNNTGS. A compositionally biased stretch (polar residues) spans 328 to 358; sequence ENELSSSTPSAQLPNPATPFLSSVSTNSQPI. The segment covering 461–471 has biased composition (low complexity); that stretch reads LKSSQLNNQNP. The span at 487-501 shows a compositional bias: polar residues; the sequence is SLETSPITNQDSASS. Composition is skewed to low complexity over residues 504 to 548 and 995 to 1018; these read AIFR…SDSS and TSTN…STPT. The 294-residue stretch at 1167 to 1460 folds into the Autotransporter domain; sequence DEVAYNNLWI…MINCGARMTF (294 aa).

This sequence belongs to the PMP outer membrane protein family.

The protein resides in the secreted. It localises to the cell wall. Its subcellular location is the cell outer membrane. This chain is Probable outer membrane protein PmpC (pmpC), found in Chlamydia muridarum (strain MoPn / Nigg).